The primary structure comprises 445 residues: Phosphoglucosamine mutase (445 aa).

Ser-100 acts as the Phosphoserine intermediate in catalysis. The Mg(2+) site is built by Ser-100, Asp-240, Asp-242, and Asp-244. At Ser-100 the chain carries Phosphoserine.

The protein belongs to the phosphohexose mutase family. Requires Mg(2+) as cofactor. In terms of processing, activated by phosphorylation.

The enzyme catalyses alpha-D-glucosamine 1-phosphate = D-glucosamine 6-phosphate. Functionally, catalyzes the conversion of glucosamine-6-phosphate to glucosamine-1-phosphate. The polypeptide is Phosphoglucosamine mutase (Pelotomaculum thermopropionicum (strain DSM 13744 / JCM 10971 / SI)).